We begin with the raw amino-acid sequence, 213 residues long: Large ribosomal subunit protein uL1 (213 aa).

The protein belongs to the universal ribosomal protein uL1 family. In terms of assembly, part of the 50S ribosomal subunit.

In terms of biological role, binds directly to 23S rRNA. Probably involved in E site tRNA release. Protein L1 is also a translational repressor protein, it controls the translation of its operon by binding to its mRNA. This chain is Large ribosomal subunit protein uL1, found in Methanosarcina acetivorans (strain ATCC 35395 / DSM 2834 / JCM 12185 / C2A).